A 224-amino-acid polypeptide reads, in one-letter code: 7-cyano-7-deazaguanine synthase (224 aa).

10-20 lines the ATP pocket; the sequence is LSGGLDSATVV. 4 residues coordinate Zn(2+): Cys189, Cys199, Cys202, and Cys205.

It belongs to the QueC family. Zn(2+) serves as cofactor.

It catalyses the reaction 7-carboxy-7-deazaguanine + NH4(+) + ATP = 7-cyano-7-deazaguanine + ADP + phosphate + H2O + H(+). It participates in purine metabolism; 7-cyano-7-deazaguanine biosynthesis. In terms of biological role, catalyzes the ATP-dependent conversion of 7-carboxy-7-deazaguanine (CDG) to 7-cyano-7-deazaguanine (preQ(0)). In Stutzerimonas stutzeri (strain A1501) (Pseudomonas stutzeri), this protein is 7-cyano-7-deazaguanine synthase.